Consider the following 223-residue polypeptide: MVSTNPPVLPISTTATDTTNQPPIVTAVVESQPPVVRAFVNGVTETVCGGLSRSRPWSELLDRSAFTKPDSLSEAGTRFRKNSSYFRVNYVCIVALILGFSLLAHPFSLILLLCLAASWLFLYLFRPSDRPLILFGRSFSEYETLGGLILSTIAVIFFTSVGSVLISALMIGIATICVHGAFRAPDDLFLDEQDHAASGFLSFIGVPAIPSVAPSASSAASPV.

Transmembrane regions (helical) follow at residues 83 to 103 (SSYF…FSLL), 105 to 125 (HPFS…LYLF), 146 to 166 (GGLI…SVLI), 170 to 190 (MIGI…DLFL), and 196 to 216 (AASG…APSA).

The protein belongs to the PRA1 family. In terms of assembly, interacts with PRA1B1, PRA1B2, PRA1B3, PRA1B4, PRA1B6 and PRA1E. As to expression, expressed in roots, lateral roots, lateral root caps, columella cells, leaves, and shoot apex.

The protein localises to the endosome membrane. May be involved in both secretory and endocytic intracellular trafficking in the endosomal/prevacuolar compartments. This chain is PRA1 family protein B5 (PRA1B5), found in Arabidopsis thaliana (Mouse-ear cress).